The sequence spans 328 residues: Extracellular exo-alpha-(1-&gt;5)-L-arabinofuranosidase (328 aa).

Residues 1-43 constitute a signal peptide (tat-tyPE signal); that stretch reads MCTREAVRMSREHDLPEIPSRRLLLKGAAAAGALTAVPGVAHA. Residue aspartate 60 is the Proton acceptor of the active site. Glutamate 236 (proton donor) is an active-site residue.

This sequence belongs to the glycosyl hydrolase 43 family. Predicted to be exported by the Tat system. The position of the signal peptide cleavage has been experimentally proven.

The protein localises to the secreted. The enzyme catalyses Hydrolysis of terminal non-reducing alpha-L-arabinofuranoside residues in alpha-L-arabinosides.. It functions in the pathway glycan metabolism; L-arabinan degradation. Its function is as follows. Involved in the degradation of arabinan and is a key enzyme in the complete degradation of the plant cell wall. Catalyzes only the cleavage of terminal alpha-(1-&gt;5) arabinofuranosyl bonds of arabinan present in the arabinofuranosyl polysaccharides or oligosaccharides. It cannot act on other arabinose-containing polysaccharides and arabinoxylo-oligosaccharides. The sequence is that of Extracellular exo-alpha-(1-&gt;5)-L-arabinofuranosidase from Streptomyces chartreusis.